The sequence spans 102 residues: RNA-binding protein Hfq (102 aa).

One can recognise a Sm domain in the interval 9 to 68 (DPFLNALRRERVPVSIYLVNGIKLQGQIESFDQFVILLKNTVSQMVYKHAISTVVPSRPV). The interval 63-102 (VPSRPVSHHSNNASGGTSSNYHHGSSAQNTSAQQDSEETE) is disordered. The segment covering 70–96 (HHSNNASGGTSSNYHHGSSAQNTSAQQ) has biased composition (polar residues).

This sequence belongs to the Hfq family. In terms of assembly, homohexamer.

Its function is as follows. RNA chaperone that binds small regulatory RNA (sRNAs) and mRNAs to facilitate mRNA translational regulation in response to envelope stress, environmental stress and changes in metabolite concentrations. Also binds with high specificity to tRNAs. The protein is RNA-binding protein Hfq of Shigella boydii serotype 18 (strain CDC 3083-94 / BS512).